A 540-amino-acid polypeptide reads, in one-letter code: CTP synthase (540 aa).

The segment at 1–264 is amidoligase domain; it reads MQYIVVTGGV…ISYLSKLSGK (264 aa). Ser12 contacts CTP. Ser12 contributes to the UTP binding site. 13-18 contacts ATP; sequence GLGKGT. Residue Tyr53 participates in L-glutamine binding. Asp70 is an ATP binding site. Residues Asp70 and Glu140 each coordinate Mg(2+). CTP-binding positions include 147–149, 185–190, and Arg221; these read DIE and KTKPTQ. Residues 185–190 and Arg221 contribute to the UTP site; that span reads KTKPTQ. The Glutamine amidotransferase type-1 domain occupies 294–527; that stretch reads YVDLHDAYIS…VQQALIYKKN (234 aa). Gly347 contacts L-glutamine. The Nucleophile; for glutamine hydrolysis role is filled by Cys374. L-glutamine-binding positions include 375-378, Glu398, and Arg455; that span reads LGFQ. Active-site residues include His500 and Glu502.

The protein belongs to the CTP synthase family. Homotetramer.

It catalyses the reaction UTP + L-glutamine + ATP + H2O = CTP + L-glutamate + ADP + phosphate + 2 H(+). It carries out the reaction L-glutamine + H2O = L-glutamate + NH4(+). The catalysed reaction is UTP + NH4(+) + ATP = CTP + ADP + phosphate + 2 H(+). The protein operates within pyrimidine metabolism; CTP biosynthesis via de novo pathway; CTP from UDP: step 2/2. Its activity is regulated as follows. Allosterically activated by GTP, when glutamine is the substrate; GTP has no effect on the reaction when ammonia is the substrate. The allosteric effector GTP functions by stabilizing the protein conformation that binds the tetrahedral intermediate(s) formed during glutamine hydrolysis. Inhibited by the product CTP, via allosteric rather than competitive inhibition. Its function is as follows. Catalyzes the ATP-dependent amination of UTP to CTP with either L-glutamine or ammonia as the source of nitrogen. Regulates intracellular CTP levels through interactions with the four ribonucleotide triphosphates. The protein is CTP synthase of Thermoplasma volcanium (strain ATCC 51530 / DSM 4299 / JCM 9571 / NBRC 15438 / GSS1).